We begin with the raw amino-acid sequence, 514 residues long: Bifunctional purine biosynthesis protein PurH (514 aa).

In terms of domain architecture, MGS-like spans 1–142 (MLALLSVSDK…KNFRHVSVVV (142 aa)).

It belongs to the PurH family.

It catalyses the reaction (6R)-10-formyltetrahydrofolate + 5-amino-1-(5-phospho-beta-D-ribosyl)imidazole-4-carboxamide = 5-formamido-1-(5-phospho-D-ribosyl)imidazole-4-carboxamide + (6S)-5,6,7,8-tetrahydrofolate. The catalysed reaction is IMP + H2O = 5-formamido-1-(5-phospho-D-ribosyl)imidazole-4-carboxamide. Its pathway is purine metabolism; IMP biosynthesis via de novo pathway; 5-formamido-1-(5-phospho-D-ribosyl)imidazole-4-carboxamide from 5-amino-1-(5-phospho-D-ribosyl)imidazole-4-carboxamide (10-formyl THF route): step 1/1. It participates in purine metabolism; IMP biosynthesis via de novo pathway; IMP from 5-formamido-1-(5-phospho-D-ribosyl)imidazole-4-carboxamide: step 1/1. This chain is Bifunctional purine biosynthesis protein PurH, found in Myxococcus xanthus (strain DK1622).